We begin with the raw amino-acid sequence, 564 residues long: Proline--tRNA ligase (564 aa).

Belongs to the class-II aminoacyl-tRNA synthetase family. ProS type 1 subfamily. Homodimer.

Its subcellular location is the cytoplasm. It catalyses the reaction tRNA(Pro) + L-proline + ATP = L-prolyl-tRNA(Pro) + AMP + diphosphate. Functionally, catalyzes the attachment of proline to tRNA(Pro) in a two-step reaction: proline is first activated by ATP to form Pro-AMP and then transferred to the acceptor end of tRNA(Pro). As ProRS can inadvertently accommodate and process non-cognate amino acids such as alanine and cysteine, to avoid such errors it has two additional distinct editing activities against alanine. One activity is designated as 'pretransfer' editing and involves the tRNA(Pro)-independent hydrolysis of activated Ala-AMP. The other activity is designated 'posttransfer' editing and involves deacylation of mischarged Ala-tRNA(Pro). The misacylated Cys-tRNA(Pro) is not edited by ProRS. This Xanthomonas campestris pv. campestris (strain 8004) protein is Proline--tRNA ligase.